The sequence spans 124 residues: Small ribosomal subunit protein uS12 (124 aa).

Asp-90 is subject to 3-methylthioaspartic acid.

It belongs to the universal ribosomal protein uS12 family. Part of the 30S ribosomal subunit. Contacts proteins S8 and S17. May interact with IF1 in the 30S initiation complex.

With S4 and S5 plays an important role in translational accuracy. In terms of biological role, interacts with and stabilizes bases of the 16S rRNA that are involved in tRNA selection in the A site and with the mRNA backbone. Located at the interface of the 30S and 50S subunits, it traverses the body of the 30S subunit contacting proteins on the other side and probably holding the rRNA structure together. The combined cluster of proteins S8, S12 and S17 appears to hold together the shoulder and platform of the 30S subunit. The chain is Small ribosomal subunit protein uS12 from Wolbachia pipientis subsp. Culex pipiens (strain wPip).